Reading from the N-terminus, the 505-residue chain is ATP synthase subunit beta, mitochondrial (505 aa).

184-191 provides a ligand contact to ATP; that stretch reads GGAGVGKT.

It belongs to the ATPase alpha/beta chains family. As to quaternary structure, F-type ATPases have 2 components, CF(1) - the catalytic core - and CF(0) - the membrane proton channel. CF(1) has five subunits: alpha(3), beta(3), gamma(1), delta(1), epsilon(1). CF(0) has three main subunits: a, b and c.

Its subcellular location is the mitochondrion. The protein localises to the mitochondrion inner membrane. The catalysed reaction is ATP + H2O + 4 H(+)(in) = ADP + phosphate + 5 H(+)(out). In terms of biological role, mitochondrial membrane ATP synthase (F(1)F(0) ATP synthase or Complex V) produces ATP from ADP in the presence of a proton gradient across the membrane which is generated by electron transport complexes of the respiratory chain. F-type ATPases consist of two structural domains, F(1) - containing the extramembraneous catalytic core, and F(0) - containing the membrane proton channel, linked together by a central stalk and a peripheral stalk. During catalysis, ATP synthesis in the catalytic domain of F(1) is coupled via a rotary mechanism of the central stalk subunits to proton translocation. Subunits alpha and beta form the catalytic core in F(1). Rotation of the central stalk against the surrounding alpha(3)beta(3) subunits leads to hydrolysis of ATP in three separate catalytic sites on the beta subunits. This chain is ATP synthase subunit beta, mitochondrial (ATP2), found in Kluyveromyces lactis (strain ATCC 8585 / CBS 2359 / DSM 70799 / NBRC 1267 / NRRL Y-1140 / WM37) (Yeast).